The sequence spans 303 residues: Nucleotide-binding protein SAR0820 (303 aa).

18–25 (GLSGAGKS) contacts ATP. 69-72 (DLRG) is a binding site for GTP.

This sequence belongs to the RapZ-like family.

Displays ATPase and GTPase activities. The sequence is that of Nucleotide-binding protein SAR0820 from Staphylococcus aureus (strain MRSA252).